A 100-amino-acid chain; its full sequence is Transcription elongation factor A protein-like 7 (100 aa).

Over residues 1–32 (MQKPCKENEGKPKCSVPKREEKRPYGEFERQQ) the composition is skewed to basic and acidic residues. The disordered stretch occupies residues 1–34 (MQKPCKENEGKPKCSVPKREEKRPYGEFERQQTE). Residues 60–88 (EEMTREGDEMERCLEEIRGLRKKFRALHS) are a coiled coil.

It belongs to the TFS-II family. TFA subfamily. In terms of tissue distribution, highly expressed in normal and fetal brain tissues, and weakly expressed in uterus and ovary. Down-regulated in epithelial ovarian, cervical, prostate, breast, brain and lung cancer cell lines and in brain and ovarian tumors.

The protein resides in the nucleus. Functionally, plays a role in the negative regulation of NF-kappa-B signaling at the basal level by modulating transcriptional activity of NF-kappa-B on its target gene promoters. Associates with cyclin D1 promoter containing Myc E-box sequence and transcriptionally represses cyclin D1 expression. Regulates telomerase reverse transcriptase expression and telomerase activity in both ALT (alternative lengthening of telomeres)and telomerase-positive cell lines. This is Transcription elongation factor A protein-like 7 (TCEAL7) from Homo sapiens (Human).